Here is a 282-residue protein sequence, read N- to C-terminus: Homeobox-leucine zipper protein HAT1 (282 aa).

Residues 71 to 134 (LEEETGVSSP…EEDYGGETCR (64 aa)) are disordered. Low complexity predominate over residues 76 to 89 (GVSSPNSTISSTVS). The segment at residues 132–191 (TCRKKLRLSKDQSAVLEDTFKEHNTLNPKQKLALAKKLGLTARQVEVWFQNRRARTKLKQ) is a DNA-binding region (homeobox). The tract at residues 199–220 (LKRCVEKLTEENRRLEKEAAEL) is leucine-zipper.

It belongs to the HD-ZIP homeobox family. Class II subfamily. Interacts with BZIP30.

Its subcellular location is the nucleus. In terms of biological role, probable transcription factor. This is Homeobox-leucine zipper protein HAT1 (HAT1) from Arabidopsis thaliana (Mouse-ear cress).